The chain runs to 156 residues: Endoribonuclease YbeY (156 aa).

Zn(2+)-binding residues include His-122, His-126, and His-132.

The protein belongs to the endoribonuclease YbeY family. Zn(2+) is required as a cofactor.

The protein localises to the cytoplasm. Single strand-specific metallo-endoribonuclease involved in late-stage 70S ribosome quality control and in maturation of the 3' terminus of the 16S rRNA. The chain is Endoribonuclease YbeY from Symbiobacterium thermophilum (strain DSM 24528 / JCM 14929 / IAM 14863 / T).